Reading from the N-terminus, the 476-residue chain is Aspartyl/glutamyl-tRNA(Asn/Gln) amidotransferase subunit B 1 (476 aa).

It belongs to the GatB/GatE family. GatB subfamily. Heterotrimer of A, B and C subunits.

It carries out the reaction L-glutamyl-tRNA(Gln) + L-glutamine + ATP + H2O = L-glutaminyl-tRNA(Gln) + L-glutamate + ADP + phosphate + H(+). The catalysed reaction is L-aspartyl-tRNA(Asn) + L-glutamine + ATP + H2O = L-asparaginyl-tRNA(Asn) + L-glutamate + ADP + phosphate + 2 H(+). Functionally, allows the formation of correctly charged Asn-tRNA(Asn) or Gln-tRNA(Gln) through the transamidation of misacylated Asp-tRNA(Asn) or Glu-tRNA(Gln) in organisms which lack either or both of asparaginyl-tRNA or glutaminyl-tRNA synthetases. The reaction takes place in the presence of glutamine and ATP through an activated phospho-Asp-tRNA(Asn) or phospho-Glu-tRNA(Gln). In Clostridium acetobutylicum (strain ATCC 824 / DSM 792 / JCM 1419 / IAM 19013 / LMG 5710 / NBRC 13948 / NRRL B-527 / VKM B-1787 / 2291 / W), this protein is Aspartyl/glutamyl-tRNA(Asn/Gln) amidotransferase subunit B 1 (gatB1).